Here is a 92-residue protein sequence, read N- to C-terminus: Small ribosomal subunit protein uS19 (92 aa).

The protein belongs to the universal ribosomal protein uS19 family.

Protein S19 forms a complex with S13 that binds strongly to the 16S ribosomal RNA. This chain is Small ribosomal subunit protein uS19, found in Parvibaculum lavamentivorans (strain DS-1 / DSM 13023 / NCIMB 13966).